The primary structure comprises 79 residues: Small ribosomal subunit protein bS18 (79 aa).

This sequence belongs to the bacterial ribosomal protein bS18 family. In terms of assembly, part of the 30S ribosomal subunit. Forms a tight heterodimer with protein bS6.

Functionally, binds as a heterodimer with protein bS6 to the central domain of the 16S rRNA, where it helps stabilize the platform of the 30S subunit. In Ureaplasma urealyticum serovar 10 (strain ATCC 33699 / Western), this protein is Small ribosomal subunit protein bS18.